The following is a 1462-amino-acid chain: Glucosyltransferase-S (1462 aa).

The segment at 35-164 (SSVSAETEQQ…RQTAAQENKN (130 aa)) is disordered. Polar residues predominate over residues 37–52 (VSAETEQQTSDKVVTQ). Over residues 71–85 (TKQAQTEQTQAQSQA) the composition is skewed to low complexity. Residues 86 to 108 (NVADTSTSITKETPSQNITTQAN) show a composition bias toward polar residues. The span at 109 to 133 (SDDKTVTNTKSEEAQTSEERTKQAE) shows a compositional bias: basic and acidic residues. The segment covering 134 to 149 (EAQATASSQALTQAKA) has biased composition (low complexity). Residues 154–163 (QRQTAAQENK) are compositionally biased toward polar residues. Cell wall-binding repeat units lie at residues 171–190 (IPNV…DGQP), 192–211 (KNFA…NTGA), 1095–1115 (STGF…GYQA), 1116–1136 (KNSF…NGHM), 1137–1156 (VYGL…NGVQ), 1180–1201 (SNGY…SGVM), 1202–1221 (AVGL…DGYQ), 1223–1244 (KGAW…SGNM), 1246–1266 (VNRF…DGIA), 1267–1286 (LVGV…DGKQ), 1310–1330 (RNIF…DGVA), 1331–1350 (VTGS…DGKQ), 1352–1372 (KGSF…SGEL), and 1374–1394 (VNRF…NGEA).

This sequence belongs to the glycosyl hydrolase 70 family.

Its subcellular location is the secreted. The catalysed reaction is [(1-&gt;6)-alpha-D-glucosyl](n) + sucrose = [(1-&gt;6)-alpha-D-glucosyl](n+1) + D-fructose. Functionally, production of extracellular glucans, that are thought to play a key role in the development of the dental plaque because of their ability to adhere to smooth surfaces and mediate the aggregation of bacterial cells and food debris. The chain is Glucosyltransferase-S (gtfD) from Streptococcus mutans serotype c (strain ATCC 700610 / UA159).